Consider the following 345-residue polypeptide: 3-isopropylmalate dehydrogenase (345 aa).

The substrate site is built by R94, R104, R130, and D215. The Mg(2+) site is built by D215, D239, and D243. 273 to 285 (GSAPDIAGKGIAN) serves as a coordination point for NAD(+).

This sequence belongs to the isocitrate and isopropylmalate dehydrogenases family. LeuB type 1 subfamily. As to quaternary structure, homodimer. Requires Mg(2+) as cofactor. The cofactor is Mn(2+).

It localises to the cytoplasm. The catalysed reaction is (2R,3S)-3-isopropylmalate + NAD(+) = 4-methyl-2-oxopentanoate + CO2 + NADH. It participates in amino-acid biosynthesis; L-leucine biosynthesis; L-leucine from 3-methyl-2-oxobutanoate: step 3/4. Functionally, catalyzes the oxidation of 3-carboxy-2-hydroxy-4-methylpentanoate (3-isopropylmalate) to 3-carboxy-4-methyl-2-oxopentanoate. The product decarboxylates to 4-methyl-2 oxopentanoate. The chain is 3-isopropylmalate dehydrogenase (leuB) from Lactococcus lactis subsp. lactis (strain IL1403) (Streptococcus lactis).